A 165-amino-acid chain; its full sequence is UPF0254 protein MmarC7_0182 (165 aa).

This sequence belongs to the UPF0254 family.

This is UPF0254 protein MmarC7_0182 from Methanococcus maripaludis (strain C7 / ATCC BAA-1331).